Consider the following 83-residue polypeptide: uncharacterized protein (83 aa).

This is an uncharacterized protein from Rickettsia prowazekii (strain Madrid E).